An 86-amino-acid polypeptide reads, in one-letter code: Large ribosomal subunit protein bL27 (86 aa).

The segment covering 1-10 has biased composition (gly residues); sequence MAQKKGGGST. The tract at residues 1-21 is disordered; it reads MAQKKGGGSTRNGRDSESKRL.

This sequence belongs to the bacterial ribosomal protein bL27 family.

This Cupriavidus pinatubonensis (strain JMP 134 / LMG 1197) (Cupriavidus necator (strain JMP 134)) protein is Large ribosomal subunit protein bL27.